Here is a 226-residue protein sequence, read N- to C-terminus: Transcriptional regulatory protein PcoR (226 aa).

Residues 3–117 (RILIVEDEQK…ELVARVRTLL (115 aa)) enclose the Response regulatory domain. At aspartate 52 the chain carries 4-aspartylphosphate. The segment at residues 125–223 (ATVCTIADMT…VRGAGYVLEI (99 aa)) is a DNA-binding region (ompR/PhoB-type).

Post-translationally, phosphorylated by PcoS.

Its subcellular location is the cytoplasm. Functionally, probable member of a two-component regulatory system PcoS/PcoR. May be involved in the activation of copper resistance gene operon pcoABCD by binding to a specific site on the cop operon promoter (copper box). In Escherichia coli, this protein is Transcriptional regulatory protein PcoR (pcoR).